Consider the following 237-residue polypeptide: Uracil-DNA glycosylase (237 aa).

Aspartate 77 acts as the Proton acceptor in catalysis.

Belongs to the uracil-DNA glycosylase (UDG) superfamily. UNG family.

It localises to the cytoplasm. The enzyme catalyses Hydrolyzes single-stranded DNA or mismatched double-stranded DNA and polynucleotides, releasing free uracil.. Functionally, excises uracil residues from the DNA which can arise as a result of misincorporation of dUMP residues by DNA polymerase or due to deamination of cytosine. In Acinetobacter baylyi (strain ATCC 33305 / BD413 / ADP1), this protein is Uracil-DNA glycosylase.